The primary structure comprises 583 residues: MPKPINVRVTTMDAELEFAIQPNTTGKQLFDQVVKTVGLREVWFFGLQYVDSKGYSTWLKLNKKVTQQDVKKENPLQFKFRAKFFPEDVSEELIQEITQRLFFLQVKEAILNDEIYCPPETAVLLASYAVQAKYGDYNKEIHKPGYLANDRLLPQRVLEQHKLTKEQWEERIQNWHEEHRGMLREDSMMEYLKIAQDLEMYGVNYFEIKNKKGTELWLGVDALGLNIYEHDDKLTPKIGFPWSEIRNISFNDKKFVIKPIDKKAPDFVFYAPRLRINKRILALCMGNHELYMRRRKPDTIEVQQMKAQAREEKHQKQLERAQLENEKKKREIAEKEKERIEREKEELMERLKQIEEQTIKAQKELEEQTRKALELDQERKRAKEEAERLEKERRAAEEAKSAIAKQAADQMKNQEQLAAELAEFTAKIALLEEAKKKKEEEATEWQHKAFAAQEDLEKTKEELKTVMSAPPPPPPPPVIPPTENEHDEHDENNAEASAELSNEGVMNHRSEEERVTETQKNERVKKQLQALSSELAQARDETKKTQNDVLHAENVKAGRDKYKTLRQIRQGNTKQRIDEFEAM.

One can recognise an FERM domain in the interval 5-295 (INVRVTTMDA…GNHELYMRRR (291 aa)). A 1,2-diacyl-sn-glycero-3-phospho-(1D-myo-inositol) is bound at residue 60 to 63 (KLNK). Lys-83 is modified (N6-succinyllysine). Lys-278 is a binding site for a 1,2-diacyl-sn-glycero-3-phospho-(1D-myo-inositol). 3 disordered regions span residues 310–330 (REEKHQKQLERAQLENEKKKR), 376–407 (DQERKRAKEEAERLEKERRAAEEAKSAIAKQA), and 462–526 (ELKT…RVKK). Positions 376–400 (DQERKRAKEEAERLEKERRAAEEAK) are enriched in basic and acidic residues. The span at 469-480 (APPPPPPPPVIP) shows a compositional bias: pro residues. Basic and acidic residues-rich tracts occupy residues 483–492 (ENEHDEHDEN) and 506–525 (MNHRSEEERVTETQKNERVK). Thr-564 is modified (phosphothreonine; by ROCK2).

Binds NHERF1. Interacts with NHERF1, NHERF2, LAYN, MME/NEP and ICAM2. Interacts with CPNE1 (via VWFA domain) and CPNE4 (via VWFA domain). Interacts (via FERM domain) with SPN/CD43 cytoplasmic tail. Interacts with CD44. Interacts with CLIC5; may work together in a complex which also includes EZR and MYO6 to stabilize linkages between the plasma membrane and subjacent actin cytoskeleton at the base of stereocilia. In terms of processing, phosphorylated by tyrosine-protein kinases. Phosphorylation by ROCK2 suppresses the head-to-tail association of the N-terminal and C-terminal halves resulting in an opened conformation which is capable of actin and membrane-binding.

Its subcellular location is the cell membrane. It is found in the cytoplasm. It localises to the cytoskeleton. The protein resides in the cleavage furrow. The protein localises to the cell projection. Its subcellular location is the microvillus. It is found in the stereocilium. A head-to-tail association, of the N-terminal and C-terminal halves results in a closed conformation (inactive form) which is incapable of actin or membrane-binding. In terms of biological role, probably plays a crucial role in the binding of the barbed end of actin filaments to the plasma membrane. This is Radixin (RDX) from Homo sapiens (Human).